The following is a 437-amino-acid chain: MKKMKIFGFLISFSLFFLSPFVCQANYDSNFTRPPPRPLFIVSHGRPKFYPQQVHISLAGKDHMRVTYTTDDLNVASMVEYGKHPKKYDKKTAGESTSYTYFFYNSGKIHHVKIGPLKPNTKYYYRCGGHGDEFSFKTPPSKFPIEFAVAGDLGQTDWTVRTLDQIRKRDFDVFLLPGDLSYADTHQPLWDSFGRLLETLASTRPWMVTEGNHEIESFPTNDHISFKSYNARWLMPHAESLSHSNLYYSFDVAGVHTVMLGSYTPYESHSDQYHWLQADLRKVDRKKTPWLVVVMHTPWYSTNKAHYGEGEKMRSALESLLYRAQVDVVFAGHVHTYERFKPIYNKKADPCGPMYITIGDGGNREGLALRFKKPQSPLSEFRESSFGHGRLRIIDHKRAHWSWHRNNDEMSSIADEVSFESPRTSSHCHSNRYRGEI.

Positions 1-25 (MKKMKIFGFLISFSLFFLSPFVCQA) are cleaved as a signal peptide. Residue Asn-30 is glycosylated (N-linked (GlcNAc...) asparagine). Residues Asp-152, Asp-179, and Tyr-182 each coordinate Fe cation. Position 179 (Asp-179) interacts with Zn(2+). The Zn(2+) site is built by Asn-212 and His-296. Asn-212 serves as a coordination point for substrate. His-306 acts as the Proton donor in catalysis. Residue His-333 coordinates Zn(2+). Residue 333 to 335 (HVH) coordinates substrate. Residue His-335 participates in Fe cation binding.

This sequence belongs to the metallophosphoesterase superfamily. Purple acid phosphatase family. In terms of assembly, homodimer. Fe cation is required as a cofactor. Zn(2+) serves as cofactor. Expressed flowers and siliques.

Its subcellular location is the secreted. The enzyme catalyses a phosphate monoester + H2O = an alcohol + phosphate. This chain is Purple acid phosphatase 21 (PAP21), found in Arabidopsis thaliana (Mouse-ear cress).